Consider the following 317-residue polypeptide: MCPPVSVRHGAKGMSCLYGAWLYHLVHGEQMKICFACFKAAFLVVKNMLEMGDWEEGVWDAEPMELSEASSEPEEWPGLSGGEGQGHLPHGISVSAGSGAQGPQPVPTELGPQEAVPLDLGPEDAEWTQALPWRFDGLSPCSHWLIPPLSWWEIFNVSPSPGQPVLLELSPTWPMDPLEAEAWLVGLKFVFLLGGFDAICYMLSMTPCWAVRTRVQRWQVLLDPGDVRVAQLQNAPEQQDLHRWKLSVLESSELGMELVPADCSLQKGGFKVHSYLPWHNSTPESWSREPGERLLVVEVVSLRELPCFRSPSPDPHN.

Residues methionine 64 to glutamate 75 are compositionally biased toward acidic residues. Residues methionine 64 to glutamine 113 are disordered. Residues glutamine 101–leucine 145 are important for interaction with piRNA.

As to quaternary structure, interacts with UBR2. Interacts with piRNA-associated proteins DDX4, EDC4, MAEL, PIWIL1, PIWIL2, RANBP9 and TDRD6. In terms of tissue distribution, specifically expressed in somatic cells of male gonad lineage.

It is found in the cytoplasm. Functionally, may be required during spermatogenesis, probably by participating in the repression of retrotransposable elements and prevent their mobilization. With its paralog, Tex19.1, collaborates with the Piwi-interacting RNA (piRNA) pathway, which mediates the repression of transposable elements during meiosis by forming complexes composed of piRNAs and Piwi proteins. Interacts with Piwi proteins and directly binds piRNAs, a class of 24 to 30 nucleotide RNAs that are generated by a Dicer-independent mechanism and are primarily derived from transposons and other repeated sequence elements. The polypeptide is Testis-expressed protein 19.2 (Tex19.2) (Mus musculus (Mouse)).